Here is a 432-residue protein sequence, read N- to C-terminus: Glutamate-gated chloride channel subunit beta (432 aa).

The first 18 residues, 1 to 18 (MSQYMMVAVAAVVAVAGS), serve as a signal peptide directing secretion. At 19–249 (SQISRRSTGG…MQLTLKRQFS (231 aa)) the chain is on the extracellular side. Asn52 carries N-linked (GlcNAc...) asparagine glycosylation. L-glutamate-binding residues include Arg69, Arg88, and Ser155. Cys164 and Cys178 are oxidised to a cystine. Ser184 lines the L-glutamate pocket. Asn219 carries an N-linked (GlcNAc...) asparagine glycan. Cys226 and Cys237 are joined by a disulfide. Residues 250-272 (YYLVQLYGPTTMIVIVSWVSFWI) traverse the membrane as a helical segment. Over 273-277 (DMHST) the chain is Cytoplasmic. Residues 278 to 299 (AGRVALGVTTLLTMTTMQAAIN) traverse the membrane as a helical segment. Residues 300-306 (AKLPPVS) are Extracellular-facing. Residues 307–327 (YVKVVDVWLGACQTFVFGALL) form a helical membrane-spanning segment. The Cytoplasmic segment spans residues 328–402 (EYAFVSYQDS…KPDYLPAKID (75 aa)). A helical membrane pass occupies residues 403-426 (YYARFCVPLGFLAFNAIYWTSCLV). The Extracellular segment spans residues 427–432 (MVSRLV).

It belongs to the ligand-gated ion channel (TC 1.A.9) family. Glutamate-gated chloride channel (TC 1.A.9.4) subfamily. Pentamer. Expressed in motor neuron commissures at the anterior portion of the worms.

The protein resides in the postsynaptic cell membrane. The protein localises to the cell membrane. In terms of biological role, glutamate-gated chloride channel subunit; channel properties may be modulated by the formation of heteromeric channels. Glutamate binding triggers a rapidly reversible current, while the anti-helmintic drug ivermectin triggers a permanently open channel configuration. The sequence is that of Glutamate-gated chloride channel subunit beta from Haemonchus contortus (Barber pole worm).